We begin with the raw amino-acid sequence, 324 residues long: Glyoxylate/hydroxypyruvate reductase B (324 aa).

Active-site residues include R237 and E266. H285 acts as the Proton donor in catalysis.

It belongs to the D-isomer specific 2-hydroxyacid dehydrogenase family. GhrB subfamily. Homodimer.

The protein resides in the cytoplasm. The enzyme catalyses glycolate + NADP(+) = glyoxylate + NADPH + H(+). It carries out the reaction (R)-glycerate + NAD(+) = 3-hydroxypyruvate + NADH + H(+). It catalyses the reaction (R)-glycerate + NADP(+) = 3-hydroxypyruvate + NADPH + H(+). In terms of biological role, catalyzes the NADPH-dependent reduction of glyoxylate and hydroxypyruvate into glycolate and glycerate, respectively. In Salmonella agona (strain SL483), this protein is Glyoxylate/hydroxypyruvate reductase B.